A 449-amino-acid polypeptide reads, in one-letter code: Lipase (449 aa).

The N-terminal stretch at 1–23 is a signal peptide; sequence MGVFDYKNLGTEASKTLFADATA. The tract at residues 58-77 is disordered; it reads RQHRLPGSDPPAFPGILTRK. S206 acts as the Charge relay system in catalysis. Ca(2+) is bound by residues G318, D387, and D396. 2 Hemolysin-type calcium-binding repeats span residues 372–389 and 390–407; these read IGSDGNDLIQGGKGADFI and EGGKGNDTIRDNSGHNTF.

This sequence belongs to the AB hydrolase superfamily. Lipase family.

The catalysed reaction is a triacylglycerol + H2O = a diacylglycerol + a fatty acid + H(+). This is Lipase from Pseudomonas fluorescens.